A 241-amino-acid polypeptide reads, in one-letter code: Small ribosomal subunit protein uS3 (241 aa).

The region spanning 39 to 108 is the KH type-2 domain; sequence IREGVLKLLK…NLKVEVKVIE (70 aa). The tract at residues 215–241 is disordered; it reads SQRVSEKAPMNNDRRFNNKNNNRGGRK. Residues 232 to 241 show a composition bias toward low complexity; sequence NKNNNRGGRK.

It belongs to the universal ribosomal protein uS3 family. Part of the 30S ribosomal subunit. Forms a tight complex with proteins S10 and S14.

Binds the lower part of the 30S subunit head. Binds mRNA in the 70S ribosome, positioning it for translation. The sequence is that of Small ribosomal subunit protein uS3 from Mesoplasma florum (Acholeplasma florum).